The chain runs to 84 residues: Acyl carrier protein homolog (84 aa).

Residues 4–79 (RDILLKIKEI…ELIAEVKHLI (76 aa)) form the Carrier domain. O-(pantetheine 4'-phosphoryl)serine is present on Ser-39.

In terms of processing, 4'-phosphopantetheine is transferred from CoA to a specific serine of the apo-ACP-like protein.

The protein operates within lipid metabolism; fatty acid biosynthesis. Its function is as follows. Carrier of the growing fatty acid chain in fatty acid biosynthesis. The polypeptide is Acyl carrier protein homolog (Mycoplasma pneumoniae (strain ATCC 29342 / M129 / Subtype 1) (Mycoplasmoides pneumoniae)).